A 463-amino-acid polypeptide reads, in one-letter code: L-seryl-tRNA(Sec) selenium transferase (463 aa).

K295 bears the N6-(pyridoxal phosphate)lysine mark.

It belongs to the SelA family. As to quaternary structure, homodecamer; pentamer of dimers. Binds only one seryl-tRNA(Sec) per dimer. Pyridoxal 5'-phosphate serves as cofactor.

The protein resides in the cytoplasm. It catalyses the reaction L-seryl-tRNA(Sec) + selenophosphate + H(+) = L-selenocysteinyl-tRNA(Sec) + phosphate. It participates in aminoacyl-tRNA biosynthesis; selenocysteinyl-tRNA(Sec) biosynthesis; selenocysteinyl-tRNA(Sec) from L-seryl-tRNA(Sec) (bacterial route): step 1/1. Functionally, converts seryl-tRNA(Sec) to selenocysteinyl-tRNA(Sec) required for selenoprotein biosynthesis. This chain is L-seryl-tRNA(Sec) selenium transferase, found in Serratia proteamaculans (strain 568).